Consider the following 326-residue polypeptide: Beta-ketoacyl-[acyl-carrier-protein] synthase III (326 aa).

Catalysis depends on residues cysteine 111 and histidine 252. The segment at 253-257 (QANIR) is ACP-binding. Residue asparagine 282 is part of the active site.

Belongs to the thiolase-like superfamily. FabH family. As to quaternary structure, homodimer.

It localises to the plastid. The protein resides in the chloroplast. It carries out the reaction malonyl-[ACP] + acetyl-CoA + H(+) = 3-oxobutanoyl-[ACP] + CO2 + CoA. The protein operates within lipid metabolism; fatty acid biosynthesis. Catalyzes the condensation reaction of fatty acid synthesis by the addition to an acyl acceptor of two carbons from malonyl-ACP. Catalyzes the first condensation reaction which initiates fatty acid synthesis and may therefore play a role in governing the total rate of fatty acid production. Possesses both acetoacetyl-ACP synthase and acetyl transacylase activities. Its substrate specificity determines the biosynthesis of branched-chain and/or straight-chain of fatty acids. The chain is Beta-ketoacyl-[acyl-carrier-protein] synthase III from Porphyra umbilicalis (Purple laver).